Reading from the N-terminus, the 118-residue chain is Ribosome-binding factor A (118 aa).

This sequence belongs to the RbfA family. As to quaternary structure, monomer. Binds 30S ribosomal subunits, but not 50S ribosomal subunits or 70S ribosomes.

The protein localises to the cytoplasm. In terms of biological role, one of several proteins that assist in the late maturation steps of the functional core of the 30S ribosomal subunit. Associates with free 30S ribosomal subunits (but not with 30S subunits that are part of 70S ribosomes or polysomes). Required for efficient processing of 16S rRNA. May interact with the 5'-terminal helix region of 16S rRNA. This is Ribosome-binding factor A from Bacillus cereus (strain AH820).